The chain runs to 68 residues: Sec-independent protein translocase protein TatA (68 aa).

Residues 1 to 21 traverse the membrane as a helical segment; it reads MGSFSIWHWLIVLAVVLLLFG. The segment at 42–68 is disordered; it reads GMGDDEVASADKSVDGKTVDHKSDEVR. The span at 53-68 shows a compositional bias: basic and acidic residues; sequence KSVDGKTVDHKSDEVR.

Belongs to the TatA/E family. The Tat system comprises two distinct complexes: a TatABC complex, containing multiple copies of TatA, TatB and TatC subunits, and a separate TatA complex, containing only TatA subunits. Substrates initially bind to the TatABC complex, which probably triggers association of the separate TatA complex to form the active translocon.

It is found in the cell inner membrane. Part of the twin-arginine translocation (Tat) system that transports large folded proteins containing a characteristic twin-arginine motif in their signal peptide across membranes. TatA could form the protein-conducting channel of the Tat system. This is Sec-independent protein translocase protein TatA from Rhizobium meliloti (strain 1021) (Ensifer meliloti).